Here is a 387-residue protein sequence, read N- to C-terminus: Beta-alanyl-dopamine/carcinine hydrolase (387 aa).

It belongs to the peptidase C45 family. The unprocessed protein forms homodimers. May form heterodimers composed of a 15 kDa alpha subunit and a 30 kDa beta subunit. Post-translationally, the protein is synthesized as a 43 kDa precursor which is then self-processed into a 15 kDa alpha subunit and a 30 kDa beta subunit. Processing appears to be necessary for beta-alanyl-dopamine/carcinine hydrolase activity. The beta subunit carries the beta-alanyl-dopamine/carcinine hydrolase activity. In terms of tissue distribution, expressed in body, head, optic lobes and retina (at protein level). Expressed in photoreceptor cells R1-R6 in the lamina and in photoreceptor cells R7 and R8 in the medulla (at protein level).

The protein resides in the cell projection. The protein localises to the axon. It is found in the cytoplasm. It carries out the reaction carcinine + H2O = histamine + beta-alanine. The catalysed reaction is beta-alanyl-dopamine + H2O = dopamine + beta-alanine. Functionally, in the cuticle, catalyzes the hydrolysis of beta-alanyl-dopamine releasing dopamine and beta-alanine; dopamine is a metabolite involved in the pigmentation and sclerotization of the insect cuticle. In the photoreceptor cells, catalyzes the hydrolysis of carcinine releasing histamine and beta-alanine contributing to the recycling of the neurotransmitter histamine in the optical nerve system. Also, regulates the cuticular hydrocarbon composition in females. This Drosophila melanogaster (Fruit fly) protein is Beta-alanyl-dopamine/carcinine hydrolase.